Here is a 96-residue protein sequence, read N- to C-terminus: UPF0235 protein Ent638_3359 (96 aa).

This sequence belongs to the UPF0235 family.

The polypeptide is UPF0235 protein Ent638_3359 (Enterobacter sp. (strain 638)).